The chain runs to 153 residues: Histone H2B.6 (153 aa).

Basic and acidic residues-rich tracts occupy residues 1 to 28 (MAPK…EKAP) and 36 to 53 (EKRL…EGKK). The disordered stretch occupies residues 1-60 (MAPKAEKKPAAKKPAEEEPAAEKAEKAPAGKKPKAEKRLPAGKGEKGSGEGKKAGRKKGK). Residues Lys-7 and Lys-37 each carry the N6-acetyllysine modification. Residue Lys-149 forms a Glycyl lysine isopeptide (Lys-Gly) (interchain with G-Cter in ubiquitin) linkage.

It belongs to the histone H2B family. As to quaternary structure, the nucleosome is a histone octamer containing two molecules each of H2A, H2B, H3 and H4 assembled in one H3-H4 heterotetramer and two H2A-H2B heterodimers. The octamer wraps approximately 147 bp of DNA. In terms of processing, can be acetylated to form H2BK6ac and H2BK33ac. Post-translationally, monoubiquitinated by BRE1 to form H2BK143ub1 and deubiquitinated by UBP26. Required for heterochromatic histone H3 di- and trimethylation at H3K4me. May give a specific tag for epigenetic transcriptional activation.

The protein resides in the nucleus. It is found in the chromosome. Functionally, core component of nucleosome. Nucleosomes wrap and compact DNA into chromatin, limiting DNA accessibility to the cellular machineries which require DNA as a template. Histones thereby play a central role in transcription regulation, DNA repair, DNA replication and chromosomal stability. DNA accessibility is regulated via a complex set of post-translational modifications of histones, also called histone code, and nucleosome remodeling. This is Histone H2B.6 (H2B.6) from Oryza sativa subsp. indica (Rice).